The chain runs to 102 residues: Small ribosomal subunit protein uS10 (102 aa).

Belongs to the universal ribosomal protein uS10 family. In terms of assembly, part of the 30S ribosomal subunit.

Functionally, involved in the binding of tRNA to the ribosomes. The protein is Small ribosomal subunit protein uS10 of Salinispora tropica (strain ATCC BAA-916 / DSM 44818 / JCM 13857 / NBRC 105044 / CNB-440).